Here is a 398-residue protein sequence, read N- to C-terminus: MNNHHTSSAAVLIIRLNPDAATAIWRLAAPGDTAQTGEWHPDAGDPTLSLLAQRHPAWVLVPASDCAFHRVALPAGARRRPQQALAFLLEEQLATEVEESHFALLHQHKTDCAVAVVGRGKMRAWQAWCDSLGLSVLALTPDVLALPHSPTGWSAVRCGEQWLFRCDTWGGMAVETVWLDQLLTHWQDLAPIACYSPPPDIAAPWQPLPAQDLLQLAAANPDARRICLRQGDFAAKRRRQPTPRRWRPVIVAALALLLLWSSNCLHDHLMLGQQADAAVQASRDFYRQWFQTEKNVVNPRLQMQQHLRQMKNAGARPALISRLGALQQIIDDTPGIRLRTLSFDAARNALQLEISAVSSQALEQFSQRARARFRVQTGEMKPRADGIEGRLTLEGNDA.

Residues 1-248 (MNNHHTSSAA…RQPTPRRWRP (248 aa)) lie on the Cytoplasmic side of the membrane. Residues 249 to 265 (VIVAALALLLLWSSNCL) traverse the membrane as a helical segment. Over 266 to 398 (HDHLMLGQQA…GRLTLEGNDA (133 aa)) the chain is Periplasmic.

The protein belongs to the GSP L family. In terms of assembly, type II secretion system is composed of four main components: the outer membrane complex, the inner membrane complex, the cytoplasmic secretion ATPase and the periplasm-spanning pseudopilus. Forms homodimers. Interacts with PulM/GspM. Interacts with PulE/GspE and PulF/GspF.

It localises to the cell inner membrane. Inner membrane component of the type II secretion system required for the energy-dependent secretion of extracellular factors such as proteases and toxins from the periplasm. Plays a role in the complex assembly and recruits PulM resulting in a stable complex in the inner membrane. Provides thus a link between the energy-providing PulE protein in the cytoplasm and the rest of the T2SS machinery. This chain is Type II secretion system protein L (pulL), found in Klebsiella pneumoniae.